An 85-amino-acid polypeptide reads, in one-letter code: RNA-binding protein Hfq (85 aa).

The Sm domain maps to 10–70 (DIFLNGARKN…ISTINPAKPL (61 aa)).

It belongs to the Hfq family. Homohexamer.

Functionally, RNA chaperone that binds small regulatory RNA (sRNAs) and mRNAs to facilitate mRNA translational regulation in response to envelope stress, environmental stress and changes in metabolite concentrations. Also binds with high specificity to tRNAs. The polypeptide is RNA-binding protein Hfq (Clostridium botulinum (strain 657 / Type Ba4)).